We begin with the raw amino-acid sequence, 103 residues long: Small ribosomal subunit protein uS10 (103 aa).

It belongs to the universal ribosomal protein uS10 family. Part of the 30S ribosomal subunit.

In terms of biological role, involved in the binding of tRNA to the ribosomes. The chain is Small ribosomal subunit protein uS10 from Sphingopyxis alaskensis (strain DSM 13593 / LMG 18877 / RB2256) (Sphingomonas alaskensis).